Here is a 177-residue protein sequence, read N- to C-terminus: Putative pre-16S rRNA nuclease (177 aa).

A disordered region spans residues 1–20; sequence MVATQQGPDRPGIDDPGRGR.

The protein belongs to the YqgF nuclease family.

It is found in the cytoplasm. In terms of biological role, could be a nuclease involved in processing of the 5'-end of pre-16S rRNA. The chain is Putative pre-16S rRNA nuclease from Rhodococcus erythropolis (strain PR4 / NBRC 100887).